The sequence spans 312 residues: Very long chain fatty acid elongase 4 (312 aa).

Residue Asn20 is glycosylated (N-linked (GlcNAc...) asparagine). Helical transmembrane passes span 42-62 (LMQS…FVWL), 78-98 (VLII…RELF), 127-147 (ALWW…FFIL), 165-185 (MFTL…FFGA), 188-208 (NSFI…GPWI), 217-237 (YLTM…ALSL), and 246-266 (WMHW…LNFY). Positions 273–292 (PKQSKTGKTATNGISSNGVN) are enriched in polar residues. Residues 273–312 (PKQSKTGKTATNGISSNGVNKSEKALENGKPQKNGKPKGE) are disordered. The N-linked (GlcNAc...) asparagine glycan is linked to Asn292. The short motif at 308–312 (KPKGE) is the Di-lysine motif element.

The protein belongs to the ELO family. ELOVL4 subfamily. As to quaternary structure, oligomer. In terms of processing, N-glycosylated. Expressed in the retina, exclusively in photoreceptor cells and in the brain, skin, testis and lens.

The protein resides in the endoplasmic reticulum membrane. It carries out the reaction a very-long-chain acyl-CoA + malonyl-CoA + H(+) = a very-long-chain 3-oxoacyl-CoA + CO2 + CoA. The enzyme catalyses hexacosanoyl-CoA + malonyl-CoA + H(+) = 3-oxooctacosanyol-CoA + CO2 + CoA. The catalysed reaction is octacosanoyl-CoA + malonyl-CoA + H(+) = 3-oxo-triacontanoyl-CoA + CO2 + CoA. It catalyses the reaction triacontanoyl-CoA + malonyl-CoA + H(+) = 3-oxo-dotriacontanoyl-CoA + CO2 + CoA. It carries out the reaction (19Z,22Z,25Z,28Z,31Z)-tetratriacontapentaenoyl-CoA + malonyl-CoA + H(+) = 3-oxo-(21Z,24Z,27Z,30Z,33Z)-hexatriacontapentaenoyl-CoA + CO2 + CoA. The enzyme catalyses (4Z,7Z,10Z,13Z,16Z,19Z)-docosahexaenoyl-CoA + malonyl-CoA + H(+) = 3-oxo-(6Z,9Z,12Z,15Z,18Z,21Z)-tetracosahexaenoyl-CoA + CO2 + CoA. The catalysed reaction is (7Z,10Z,13Z,16Z)-docosatetraenoyl-CoA + malonyl-CoA + H(+) = (9Z,12Z,15Z,18Z)-3-oxotetracosatetraenoyl-CoA + CO2 + CoA. It catalyses the reaction (11Z,14Z,17Z,20Z,23Z)-hexacosapentaenoyl-CoA + malonyl-CoA + H(+) = 3-oxo-(13Z,16Z,19Z,22Z,25Z)-octacosapentaenoyl-CoA + CO2 + CoA. It carries out the reaction (13Z,16Z,19Z,22Z,25Z)-octacosapentaenoyl-CoA + malonyl-CoA + H(+) = 3-oxo-(15Z,18Z,21Z,24Z,27Z)-triacontapentaenoyl-CoA + CO2 + CoA. The enzyme catalyses (15Z,18Z,21Z,24Z,27Z)-triacontapentaenoyl-CoA + malonyl-CoA + H(+) = 3-oxo-(17Z,20Z,23Z,26Z,29Z)-dotriacontapentaenoyl-CoA + CO2 + CoA. The catalysed reaction is (17Z,20Z,23Z,26Z,29Z)-dotriacontapentaenoyl-CoA + malonyl-CoA + H(+) = 3-oxo-(19Z,22Z,25Z,28Z,31Z)-tetratriacontapentaenoyl-CoA + CO2 + CoA. It catalyses the reaction (21Z,24Z,27Z,30Z,33Z)-hexatriacontapentaenoyl-CoA + malonyl-CoA + H(+) = 3-oxo-(23Z,26Z,29Z,32Z,35Z)-octatriacontapentaenoyl-CoA + CO2 + CoA. It carries out the reaction (11Z,14Z,17Z,20Z)-hexacosatetraenoyl-CoA + malonyl-CoA + H(+) = (13Z,16Z,19Z,22Z)-3-oxooctacosatetraenoyl-CoA + CO2 + CoA. The enzyme catalyses (13Z,16Z,19Z,22Z)-octacosatetraenoyl-CoA + malonyl-CoA + H(+) = 3-oxo-(15Z,18Z,21Z,24Z)-triacontatetraenoyl-CoA + CO2 + CoA. The catalysed reaction is (15Z,18Z,21Z,24Z)-triacontatetraenoyl-CoA + malonyl-CoA + H(+) = 3-oxo-(17Z,20Z,23Z,26Z)-dotriacontatetraenoyl-CoA + CO2 + CoA. It catalyses the reaction (17Z,20Z,23Z,26Z)-dotriacontatetraenoyl-CoA + malonyl-CoA + H(+) = 3-oxo-(19Z,22Z,25Z,28Z)-tetratriacontatetraenoyl-CoA + CO2 + CoA. It carries out the reaction (19Z,22Z,25Z,28Z)-tetratriacontatetraenoyl-CoA + malonyl-CoA + H(+) = 3-oxo-(21Z,24Z,27Z,30Z)-hexatriacontatetraenoyl-CoA + CO2 + CoA. The enzyme catalyses (21Z,24Z,27Z,30Z)-hexatriacontatetraenoyl-CoA + malonyl-CoA + H(+) = 3-oxo-(23Z,26Z,29Z,32Z)-octatriacontatetraenoyl-CoA + CO2 + CoA. The catalysed reaction is (6Z,9Z,12Z,15Z,18Z,21Z)-tetracosahexaenoyl-CoA + malonyl-CoA + H(+) = 3-oxo-(8Z,11Z,14Z,17Z,20Z,23Z)-hexacosahexaenoyl-CoA + CO2 + CoA. It catalyses the reaction (8Z,11Z,14Z,17Z,20Z,23Z)-hexacosahexaenoyl-CoA + malonyl-CoA + H(+) = 3-oxo-(10Z,13Z,16Z,19Z,22Z,25Z)-octacosahexaenoyl-CoA + CO2 + CoA. It carries out the reaction (10Z,13Z,16Z,19Z,22Z,25Z)-octacosahexaenoyl-CoA + malonyl-CoA + H(+) = 3-oxo-(12Z,15Z,18Z,21Z,24Z,27Z)-triacontahexaenoyl-CoA + CO2 + CoA. The enzyme catalyses (12Z,15Z,18Z,21Z,24Z,27Z)-triacontahexaenoyl-CoA + malonyl-CoA + H(+) = 3-oxo-(14Z,17Z,20Z,23Z,26Z,29Z)-dotriacontahexaenoyl-CoA + CO2 + CoA. The catalysed reaction is (14Z,17Z,20Z,23Z,26Z,29Z)-dotriacontahexaenoyl-CoA + malonyl-CoA + H(+) = 3-oxo-(16Z,19Z,22Z,25Z,28Z,31Z)-tetratriacontahexaenoyl-CoA + CO2 + CoA. It catalyses the reaction (16Z,19Z,22Z,25Z,28Z,31Z)-tetratriacontahexaenoyl-CoA + malonyl-CoA + H(+) = 3-oxo-(18Z,21Z,24Z,27Z,30Z,33Z)-hexatriacontahexaenoyl-CoA + CO2 + CoA. It carries out the reaction (9Z,12Z,15Z,18Z,21Z)-tetracosapentaenoyl-CoA + malonyl-CoA + H(+) = 3-oxo-(11Z,14Z,17Z,20Z,23Z)-hexacosapentaenoyl-CoA + CO2 + CoA. It functions in the pathway lipid metabolism; fatty acid biosynthesis. Functionally, catalyzes the first and rate-limiting reaction of the four reactions that constitute the long-chain fatty acids elongation cycle. This endoplasmic reticulum-bound enzymatic process allows the addition of 2 carbons to the chain of long- and very long-chain fatty acids (VLCFAs) per cycle. Condensing enzyme that catalyzes the synthesis of very long chain saturated (VLC-SFA) and polyunsaturated (PUFA) fatty acids that are involved in multiple biological processes as precursors of membrane lipids and lipid mediators. May play a critical role in early brain and skin development. The sequence is that of Very long chain fatty acid elongase 4 from Mus musculus (Mouse).